A 699-amino-acid polypeptide reads, in one-letter code: DnaJ homolog subfamily C member 14 (699 aa).

The disordered stretch occupies residues 1-230 (MAQKHPGEGG…RHRLGRKRSQ (230 aa)). Residues 75–84 (HGPPRGPGPP) show a composition bias toward pro residues. A compositionally biased stretch (acidic residues) spans 86-102 (AEEDPDQSEASSEESGV). Polar residues predominate over residues 117–133 (DGNSSFLSIPSTCNCQG). A compositionally biased stretch (acidic residues) spans 163–176 (GEDEELEGEYDEEE). The segment covering 203–218 (PAKEDTREGGRRDPRS) has biased composition (basic and acidic residues). Residues 219–228 (PGRHRLGRKR) show a composition bias toward basic residues. The next 3 helical transmembrane spans lie at 251 to 271 (AGFW…ETCG), 301 to 321 (GWAQ…AGLF), and 327 to 347 (LVGA…QLGW). Residues 444-508 (NPFHVLGVEA…ERRKEYEMKR (65 aa)) enclose the J domain. The interval 655 to 699 (MSNGNFFAAPQPGPGATAASKPNSTVPKGEAKPKRRKKVRRPFQR) is disordered. Positions 662–673 (AAPQPGPGATAA) are enriched in low complexity. The span at 687–699 (PKRRKKVRRPFQR) shows a compositional bias: basic residues.

As to quaternary structure, interacts with the FxxxFxxxF motif of DRD1 via its C-terminal domain. Interacts with pestivirus nonstructural protein NS2.

The protein resides in the endoplasmic reticulum membrane. Functionally, regulates the export of target proteins, such as DRD1, from the endoplasmic reticulum to the cell surface. Promotes cleavage of pestivirus polyprotein. In Bos taurus (Bovine), this protein is DnaJ homolog subfamily C member 14 (DNAJC14).